The primary structure comprises 395 residues: S-adenosylmethionine synthase (395 aa).

Residue H18 participates in ATP binding. Residue D20 coordinates Mg(2+). K(+) is bound at residue E46. The L-methionine site is built by E59 and Q103. The segment at 103-113 is flexible loop; sequence QSVDIAVGVDA. Residues 170-172, 235-236, D244, 250-251, A267, and K271 contribute to the ATP site; these read DAK, KF, and RK. Position 244 (D244) interacts with L-methionine. K275 serves as a coordination point for L-methionine.

The protein belongs to the AdoMet synthase family. In terms of assembly, homotetramer; dimer of dimers. Mg(2+) is required as a cofactor. It depends on K(+) as a cofactor.

It is found in the cytoplasm. The enzyme catalyses L-methionine + ATP + H2O = S-adenosyl-L-methionine + phosphate + diphosphate. It functions in the pathway amino-acid biosynthesis; S-adenosyl-L-methionine biosynthesis; S-adenosyl-L-methionine from L-methionine: step 1/1. Catalyzes the formation of S-adenosylmethionine (AdoMet) from methionine and ATP. The overall synthetic reaction is composed of two sequential steps, AdoMet formation and the subsequent tripolyphosphate hydrolysis which occurs prior to release of AdoMet from the enzyme. This is S-adenosylmethionine synthase from Acidiphilium cryptum (strain JF-5).